The following is a 122-amino-acid chain: Urease subunit beta (122 aa).

The disordered stretch occupies residues 102-122 (DGGTAVAGEPRPGIAAERDHQ).

Belongs to the urease beta subunit family. In terms of assembly, heterotrimer of UreA (gamma), UreB (beta) and UreC (alpha) subunits. Three heterotrimers associate to form the active enzyme.

It is found in the cytoplasm. It carries out the reaction urea + 2 H2O + H(+) = hydrogencarbonate + 2 NH4(+). It participates in nitrogen metabolism; urea degradation; CO(2) and NH(3) from urea (urease route): step 1/1. The protein is Urease subunit beta of Paenarthrobacter aurescens (strain TC1).